Reading from the N-terminus, the 539-residue chain is 3-hydroxy-3-methylglutaryl-coenzyme A reductase 1 (539 aa).

The helical transmembrane segment at 63–83 threads the bilayer; sequence FATVVCQLASVVYLLSLFAHP. Residues 84-124 are linker; sequence DAPATTTGDDDDGQGGSRRARPAAAEPAPMHGHGGGMMEAD. A disordered region spans residues 87-116; that stretch reads ATTTGDDDDGQGGSRRARPAAAEPAPMHGH. A compositionally biased stretch (low complexity) spans 105 to 114; it reads PAAAEPAPMH. Residues 125–539 form a catalytic region; sequence DEEIVAAVAS…SSKDVAKAAS (415 aa). The active-site Charge relay system is Glu-218. Asn-282 carries N-linked (GlcNAc...) asparagine glycosylation. Active-site charge relay system residues include Lys-350 and Asp-426. The helical transmembrane segment at 496–516 threads the bilayer; the sequence is LATIVAGSVLAGELSLLAALA. His-524 serves as the catalytic Proton donor. N-linked (GlcNAc...) asparagine glycosylation occurs at Asn-528.

This sequence belongs to the HMG-CoA reductase family.

It localises to the endoplasmic reticulum membrane. It carries out the reaction (R)-mevalonate + 2 NADP(+) + CoA = (3S)-3-hydroxy-3-methylglutaryl-CoA + 2 NADPH + 2 H(+). It functions in the pathway metabolic intermediate biosynthesis; (R)-mevalonate biosynthesis; (R)-mevalonate from acetyl-CoA: step 3/3. In terms of biological role, catalyzes the synthesis of mevalonate. The specific precursor of all isoprenoid compounds present in plants. This is 3-hydroxy-3-methylglutaryl-coenzyme A reductase 1 (HMG1) from Oryza sativa subsp. indica (Rice).